Consider the following 193-residue polypeptide: Phosphoheptose isomerase (193 aa).

The region spanning 37-193 is the SIS domain; it reads LADSFKVGGK…QLIEKEMVKA (157 aa). 52–54 contributes to the substrate binding site; it reads NGG. Residues histidine 61 and glutamate 65 each contribute to the Zn(2+) site. Residues glutamate 65, 93 to 94, 119 to 121, serine 124, and glutamine 172 each bind substrate; these read ND and STS. Glutamine 172 and histidine 180 together coordinate Zn(2+).

It belongs to the SIS family. GmhA subfamily. In terms of assembly, homotetramer. The cofactor is Zn(2+).

The protein resides in the cytoplasm. It carries out the reaction 2 D-sedoheptulose 7-phosphate = D-glycero-alpha-D-manno-heptose 7-phosphate + D-glycero-beta-D-manno-heptose 7-phosphate. The protein operates within carbohydrate biosynthesis; D-glycero-D-manno-heptose 7-phosphate biosynthesis; D-glycero-alpha-D-manno-heptose 7-phosphate and D-glycero-beta-D-manno-heptose 7-phosphate from sedoheptulose 7-phosphate: step 1/1. Its pathway is bacterial outer membrane biogenesis; LPS core biosynthesis. Its function is as follows. Catalyzes the isomerization of sedoheptulose 7-phosphate in D-glycero-D-manno-heptose 7-phosphate. This chain is Phosphoheptose isomerase, found in Photorhabdus laumondii subsp. laumondii (strain DSM 15139 / CIP 105565 / TT01) (Photorhabdus luminescens subsp. laumondii).